The following is a 435-amino-acid chain: 5-methylthioadenosine/S-adenosylhomocysteine deaminase (435 aa).

Zn(2+)-binding residues include histidine 65 and histidine 67. Substrate-binding residues include glutamate 94, arginine 150, and histidine 189. Histidine 216 provides a ligand contact to Zn(2+). Positions 219 and 304 each coordinate substrate. Residue aspartate 304 coordinates Zn(2+).

The protein belongs to the metallo-dependent hydrolases superfamily. MTA/SAH deaminase family. Zn(2+) is required as a cofactor.

The enzyme catalyses S-adenosyl-L-homocysteine + H2O + H(+) = S-inosyl-L-homocysteine + NH4(+). The catalysed reaction is S-methyl-5'-thioadenosine + H2O + H(+) = S-methyl-5'-thioinosine + NH4(+). Catalyzes the deamination of 5-methylthioadenosine and S-adenosyl-L-homocysteine into 5-methylthioinosine and S-inosyl-L-homocysteine, respectively. Is also able to deaminate adenosine. The sequence is that of 5-methylthioadenosine/S-adenosylhomocysteine deaminase from Bacillus cereus (strain B4264).